The chain runs to 506 residues: Chorion-specific transcription factor GCMb (506 aa).

The GCM DNA-binding region spans 19–174; that stretch reads LSWDINDPQM…KSETEARRSA (156 aa). Positions 81, 87, 91, 118, 121, 130, 157, and 159 each coordinate Zn(2+). Residues 155-172 show a composition bias toward basic and acidic residues; it reads GVHDHPRPESKSETEARR. Residues 155–213 form a disordered region; sequence GVHDHPRPESKSETEARRSAIKRQMASFYQPQKKRIRESEAEENQDSSGHFSNIPPLEN. The C-terminal conserved inhibitory domain (CCID) stretch occupies residues 379–395; it reads LQTVITTTTKVSYQAYQ.

Its subcellular location is the nucleus. In terms of biological role, transcription factor that binds specific sequences on gene promoters and activate their transcription. Through the regulation of gene transcription, may play a role in parathyroid gland development. This Homo sapiens (Human) protein is Chorion-specific transcription factor GCMb.